The following is a 359-amino-acid chain: Peptide chain release factor 1 (359 aa).

Position 235 is an N5-methylglutamine (Gln-235). Positions 283–309 (QKAESERSQARRSQVGSGDRSERIRTY) are disordered.

It belongs to the prokaryotic/mitochondrial release factor family. Post-translationally, methylated by PrmC. Methylation increases the termination efficiency of RF1.

Its subcellular location is the cytoplasm. Its function is as follows. Peptide chain release factor 1 directs the termination of translation in response to the peptide chain termination codons UAG and UAA. This Brucella suis (strain ATCC 23445 / NCTC 10510) protein is Peptide chain release factor 1.